The primary structure comprises 142 residues: Transcriptional regulator MraZ (142 aa).

2 consecutive SpoVT-AbrB domains span residues 5–47 (EYQH…TINE) and 76–119 (ACIV…SREK).

The protein belongs to the MraZ family. As to quaternary structure, forms oligomers.

The protein localises to the cytoplasm. It localises to the nucleoid. This Clostridium botulinum (strain Alaska E43 / Type E3) protein is Transcriptional regulator MraZ.